The primary structure comprises 236 residues: 2-C-methyl-D-erythritol 4-phosphate cytidylyltransferase (236 aa).

The protein belongs to the IspD/TarI cytidylyltransferase family. IspD subfamily. In terms of assembly, homodimer.

The catalysed reaction is 2-C-methyl-D-erythritol 4-phosphate + CTP + H(+) = 4-CDP-2-C-methyl-D-erythritol + diphosphate. It participates in isoprenoid biosynthesis; isopentenyl diphosphate biosynthesis via DXP pathway; isopentenyl diphosphate from 1-deoxy-D-xylulose 5-phosphate: step 2/6. Its function is as follows. Catalyzes the formation of 4-diphosphocytidyl-2-C-methyl-D-erythritol from CTP and 2-C-methyl-D-erythritol 4-phosphate (MEP). The chain is 2-C-methyl-D-erythritol 4-phosphate cytidylyltransferase from Salmonella paratyphi A (strain ATCC 9150 / SARB42).